A 360-amino-acid polypeptide reads, in one-letter code: Methylthioribose-1-phosphate isomerase (360 aa).

The active-site Proton donor is the D246.

The protein belongs to the eIF-2B alpha/beta/delta subunits family. MtnA subfamily.

It localises to the cytoplasm. Its subcellular location is the nucleus. It catalyses the reaction 5-(methylsulfanyl)-alpha-D-ribose 1-phosphate = 5-(methylsulfanyl)-D-ribulose 1-phosphate. The protein operates within amino-acid biosynthesis; L-methionine biosynthesis via salvage pathway; L-methionine from S-methyl-5-thio-alpha-D-ribose 1-phosphate: step 1/6. Catalyzes the interconversion of methylthioribose-1-phosphate (MTR-1-P) into methylthioribulose-1-phosphate (MTRu-1-P). In Aedes aegypti (Yellowfever mosquito), this protein is Methylthioribose-1-phosphate isomerase.